The primary structure comprises 226 residues: Glutathione S-transferase kappa 1 (226 aa).

16-18 (SPY) contacts glutathione. K49 is modified (N6-succinyllysine). Residue N53 participates in glutathione binding. 2 positions are modified to N6-acetyllysine: K71 and K85. Residue K116 is modified to N6-acetyllysine; alternate. N6-succinyllysine; alternate is present on K116. An N6-succinyllysine modification is found at K144. At K158 the chain carries N6-acetyllysine; alternate. K158 bears the N6-succinyllysine; alternate mark. N6-acetyllysine occurs at positions 165 and 169. Glutathione contacts are provided by residues L183 and 200-201 (SD).

It belongs to the GST superfamily. Kappa family. Homodimer. In terms of tissue distribution, ubiquitous.

The protein resides in the peroxisome. It carries out the reaction RX + glutathione = an S-substituted glutathione + a halide anion + H(+). Functionally, glutathione S-transferase that catalyzes the conjugation of glutathione to exogenous and endogenous compounds. Significant glutathione conjugating activity is found only with the model substrate, 1-chloro-2,4-dinitrobenzene (CDNB). The polypeptide is Glutathione S-transferase kappa 1 (GSTK1) (Homo sapiens (Human)).